The following is a 436-amino-acid chain: Trigger factor (436 aa).

Residues 164–249 (GDTVVIDYKG…IHEIKEKQLP (86 aa)) form the PPIase FKBP-type domain.

This sequence belongs to the FKBP-type PPIase family. Tig subfamily.

It localises to the cytoplasm. The enzyme catalyses [protein]-peptidylproline (omega=180) = [protein]-peptidylproline (omega=0). Functionally, involved in protein export. Acts as a chaperone by maintaining the newly synthesized protein in an open conformation. Functions as a peptidyl-prolyl cis-trans isomerase. This Limosilactobacillus reuteri (strain DSM 20016) (Lactobacillus reuteri) protein is Trigger factor.